We begin with the raw amino-acid sequence, 205 residues long: Holliday junction branch migration complex subunit RuvA (205 aa).

A domain I region spans residues 1–64; that stretch reads MIGKLKGVID…EDMIRLYGFA (64 aa). Residues 65–143 form a domain II region; the sequence is NQLEREWFRL…AFAGDASGTI (79 aa). Residues 144–152 are flexible linker; the sequence is GLKQELGAG. A domain III region spans residues 153–205; that stretch reads AAPAPVADAVSALSNLGYSRDQAANAVAAALKEAGENADSAKLIRLGLKELSR.

This sequence belongs to the RuvA family. As to quaternary structure, homotetramer. Forms an RuvA(8)-RuvB(12)-Holliday junction (HJ) complex. HJ DNA is sandwiched between 2 RuvA tetramers; dsDNA enters through RuvA and exits via RuvB. An RuvB hexamer assembles on each DNA strand where it exits the tetramer. Each RuvB hexamer is contacted by two RuvA subunits (via domain III) on 2 adjacent RuvB subunits; this complex drives branch migration. In the full resolvosome a probable DNA-RuvA(4)-RuvB(12)-RuvC(2) complex forms which resolves the HJ.

It localises to the cytoplasm. The RuvA-RuvB-RuvC complex processes Holliday junction (HJ) DNA during genetic recombination and DNA repair, while the RuvA-RuvB complex plays an important role in the rescue of blocked DNA replication forks via replication fork reversal (RFR). RuvA specifically binds to HJ cruciform DNA, conferring on it an open structure. The RuvB hexamer acts as an ATP-dependent pump, pulling dsDNA into and through the RuvAB complex. HJ branch migration allows RuvC to scan DNA until it finds its consensus sequence, where it cleaves and resolves the cruciform DNA. In Brucella anthropi (strain ATCC 49188 / DSM 6882 / CCUG 24695 / JCM 21032 / LMG 3331 / NBRC 15819 / NCTC 12168 / Alc 37) (Ochrobactrum anthropi), this protein is Holliday junction branch migration complex subunit RuvA.